A 94-amino-acid polypeptide reads, in one-letter code: RNA-binding protein Hfq (94 aa).

A Sm domain is found at D9–F68. Positions V70–E94 are disordered.

The protein belongs to the Hfq family. Homohexamer.

Its function is as follows. RNA chaperone that binds small regulatory RNA (sRNAs) and mRNAs to facilitate mRNA translational regulation in response to envelope stress, environmental stress and changes in metabolite concentrations. Also binds with high specificity to tRNAs. This is RNA-binding protein Hfq from Shewanella woodyi (strain ATCC 51908 / MS32).